The primary structure comprises 183 residues: Calcineurin subunit B type 2 (183 aa).

The N-myristoyl glycine moiety is linked to residue Gly-2. EF-hand domains lie at 25-60 (REIKRLYKRFKRLDKEEKGSINVEDFNQIPELSMNP), 64-92 (RIISIFDVNRDGQVNFKQFVKSLSTFHPK), 94-129 (DKADKIKILFKVYDINNDGFITRDEIETILTMMVGS), and 135-170 (QISSIVEETLNEADVNGKGKLDYPDFYNSIGSSGCN). 4 residues coordinate Ca(2+): Asp-107, Asn-109, Asp-111, and Glu-118.

The protein belongs to the calcineurin regulatory subunit family. Calcineurin is composed of a catalytic subunit (A) and a regulatory subunit (B).

Functionally, regulatory subunit of calcineurin, a calcium-dependent, calmodulin stimulated protein phosphatase. Confers calcium sensitivity. This chain is Calcineurin subunit B type 2 (cnbB), found in Dictyostelium discoideum (Social amoeba).